The primary structure comprises 94 residues: Large ribosomal subunit protein bL25 (94 aa).

The protein belongs to the bacterial ribosomal protein bL25 family. In terms of assembly, part of the 50S ribosomal subunit; part of the 5S rRNA/L5/L18/L25 subcomplex. Contacts the 5S rRNA. Binds to the 5S rRNA independently of L5 and L18.

Functionally, this is one of the proteins that binds to the 5S RNA in the ribosome where it forms part of the central protuberance. The chain is Large ribosomal subunit protein bL25 from Escherichia coli O157:H7.